The primary structure comprises 509 residues: Scavenger receptor class B member 1 (509 aa).

Topologically, residues methionine 1 to alanine 11 are cytoplasmic. A helical transmembrane segment spans residues leucine 12 to valine 32. Residues proline 33–valine 440 lie on the Extracellular side of the membrane. N-linked (GlcNAc...) asparagine glycosylation is found at asparagine 102, asparagine 108, asparagine 116, asparagine 173, asparagine 212, asparagine 227, asparagine 255, asparagine 310, asparagine 330, and asparagine 383. Cysteine 251 and cysteine 384 form a disulfide bridge. Residues leucine 441–isoleucine 461 traverse the membrane as a helical segment. Over tyrosine 462 to leucine 509 the chain is Cytoplasmic.

This sequence belongs to the CD36 family. In terms of assembly, the C-terminal region binds to PDZK1. In terms of processing, N-glycosylated. Post-translationally, the six cysteines of the extracellular domain are all involved in intramolecular disulfide bonds.

The protein resides in the cell membrane. It is found in the membrane. Its subcellular location is the caveola. In terms of biological role, receptor for different ligands such as phospholipids, cholesterol ester, lipoproteins, phosphatidylserine and apoptotic cells. Receptor for HDL, mediating selective uptake of cholesteryl ether and HDL-dependent cholesterol efflux. Also facilitates the flux of free and esterified cholesterol between the cell surface and apoB-containing lipoproteins and modified lipoproteins, although less efficiently than HDL. May be involved in the phagocytosis of apoptotic cells, via its phosphatidylserine binding activity. This is Scavenger receptor class B member 1 (Scarb1) from Rattus norvegicus (Rat).